A 328-amino-acid chain; its full sequence is DNA polymerase III subunit delta' (328 aa).

In terms of assembly, DNA polymerase III contains a core (composed of alpha, epsilon and theta chains) that associates with a tau subunit. This core dimerizes to form the POLIII' complex. PolIII' associates with the gamma complex (composed of gamma, delta, delta', psi and chi chains) and with the beta chain to form the complete DNA polymerase III complex.

The catalysed reaction is DNA(n) + a 2'-deoxyribonucleoside 5'-triphosphate = DNA(n+1) + diphosphate. In terms of biological role, DNA polymerase III is a complex, multichain enzyme responsible for most of the replicative synthesis in bacteria. This DNA polymerase also exhibits 3' to 5' exonuclease activity. This chain is DNA polymerase III subunit delta' (holB), found in Pseudomonas aeruginosa (strain ATCC 15692 / DSM 22644 / CIP 104116 / JCM 14847 / LMG 12228 / 1C / PRS 101 / PAO1).